Here is a 190-residue protein sequence, read N- to C-terminus: Vespryn-21 (190 aa).

Positions 1-20 (MLLFTLCFFADLENGGKALA) are cleaved as a signal peptide. The 107-residue stretch at 21–127 (SPPGKWQKAD…LIWQRGLWFL (107 aa)) folds into the B30.2/SPRY domain. The propeptide occupies 128 to 190 (QRLETDSDKL…LGGGVSLTNL (63 aa)).

It belongs to the ohanin/vespryn family. Expressed by the venom gland.

The protein resides in the secreted. Neurotoxin that produces dose-dependent hypolocomotion and hyperalgesia in mice. May directly act on the central nervous system, as it is 6500-fold more potent when administered intracerebroventricularly than intraperitoneal. The protein is Vespryn-21 of Drysdalia coronoides (White-lipped snake).